The chain runs to 493 residues: Ribose import ATP-binding protein RbsA (493 aa).

ABC transporter domains follow at residues 3–239 (IKMK…VGRE) and 252–493 (GRVV…TGGR). 35–42 (GENGAGKS) is an ATP binding site.

It belongs to the ABC transporter superfamily. Ribose importer (TC 3.A.1.2.1) family. In terms of assembly, the complex is composed of an ATP-binding protein (RbsA), two transmembrane proteins (RbsC) and a solute-binding protein (RbsB).

The protein localises to the cell membrane. It carries out the reaction D-ribose(out) + ATP + H2O = D-ribose(in) + ADP + phosphate + H(+). In terms of biological role, part of the ABC transporter complex RbsABC involved in ribose import. Responsible for energy coupling to the transport system. In Bacillus licheniformis (strain ATCC 14580 / DSM 13 / JCM 2505 / CCUG 7422 / NBRC 12200 / NCIMB 9375 / NCTC 10341 / NRRL NRS-1264 / Gibson 46), this protein is Ribose import ATP-binding protein RbsA.